The primary structure comprises 81 residues: uncharacterized protein (81 aa).

Helical transmembrane passes span 1–21 and 27–47; these read MTLFSFFLVILSFYYILFSLL and IFIYIKIIPTVSYFHFNHHFF.

Its subcellular location is the membrane. This is an uncharacterized protein from Saccharomyces cerevisiae (strain ATCC 204508 / S288c) (Baker's yeast).